Here is a 226-residue protein sequence, read N- to C-terminus: Large ribosomal subunit protein uL1 (226 aa).

This sequence belongs to the universal ribosomal protein uL1 family. Part of the 50S ribosomal subunit.

Its function is as follows. Binds directly to 23S rRNA. The L1 stalk is quite mobile in the ribosome, and is involved in E site tRNA release. Functionally, protein L1 is also a translational repressor protein, it controls the translation of the L11 operon by binding to its mRNA. In Mycoplasma pneumoniae (strain ATCC 29342 / M129 / Subtype 1) (Mycoplasmoides pneumoniae), this protein is Large ribosomal subunit protein uL1.